The chain runs to 108 residues: Iron-sulfur cluster assembly protein CyaY (108 aa).

This sequence belongs to the frataxin family.

In terms of biological role, involved in iron-sulfur (Fe-S) cluster assembly. May act as a regulator of Fe-S biogenesis. This Pseudomonas aeruginosa (strain ATCC 15692 / DSM 22644 / CIP 104116 / JCM 14847 / LMG 12228 / 1C / PRS 101 / PAO1) protein is Iron-sulfur cluster assembly protein CyaY.